Here is a 419-residue protein sequence, read N- to C-terminus: CDP-diacylglycerol--serine O-phosphatidyltransferase 3 (419 aa).

Residues 1–51 are disordered; that stretch reads MPVRRRWYPPSSTAAQPSPDGGDVNTDDADACPSSRQQRPPSLPQHSAPIH. Residues 33–47 show a composition bias toward low complexity; the sequence is PSSRQQRPPSLPQHS. Transmembrane regions (helical) follow at residues 103-123, 142-162, 168-188, 260-280, 287-307, 359-379, and 384-404; these read PHTVSVLLAGACLLIWASGVL, WAMIAVFLAYCTLQAPSTILI, VWRLVHGMAVVYLVALTFLLF, LLLWVLSVGFELMELTFRHML, WWDSIILDIMICNWFGIWAGM, FIQVFCLCVGFMTVELNTFFL, and WIPPRNPLVVYRLILWWLIAI.

The protein belongs to the CDP-alcohol phosphatidyltransferase class-I family.

It is found in the endoplasmic reticulum membrane. It catalyses the reaction a CDP-1,2-diacyl-sn-glycerol + L-serine = a 1,2-diacyl-sn-glycero-3-phospho-L-serine + CMP + H(+). The protein operates within phospholipid metabolism; phosphatidylethanolamine biosynthesis; phosphatidylethanolamine from CDP-diacylglycerol: step 1/2. Catalyzes a base-exchange reaction in which the polar head group of phosphatidylethanolamine (PE) or phosphatidylcholine (PC) is replaced by L-serine. The protein is CDP-diacylglycerol--serine O-phosphatidyltransferase 3 (PSS3) of Oryza sativa subsp. japonica (Rice).